The primary structure comprises 152 residues: Protein NrdI (152 aa).

The protein belongs to the NrdI family.

In terms of biological role, probably involved in ribonucleotide reductase function. The protein is Protein NrdI of Rhodococcus opacus (strain B4).